Consider the following 147-residue polypeptide: Sec-independent protein translocase protein TatB (147 aa).

Residues 1–21 (MFDISFSEILVIAAVALIVIG) traverse the membrane as a helical segment. Residues 67–88 (EETGRSIENSVHTELDKFRETV) are compositionally biased toward basic and acidic residues. The tract at residues 67–147 (EETGRSIENS…GVNRERETAE (81 aa)) is disordered. Residues 103–117 (APAGESSPPQNSSPA) are compositionally biased toward low complexity.

It belongs to the TatB family. In terms of assembly, the Tat system comprises two distinct complexes: a TatABC complex, containing multiple copies of TatA, TatB and TatC subunits, and a separate TatA complex, containing only TatA subunits. Substrates initially bind to the TatABC complex, which probably triggers association of the separate TatA complex to form the active translocon.

It is found in the cell inner membrane. Part of the twin-arginine translocation (Tat) system that transports large folded proteins containing a characteristic twin-arginine motif in their signal peptide across membranes. Together with TatC, TatB is part of a receptor directly interacting with Tat signal peptides. TatB may form an oligomeric binding site that transiently accommodates folded Tat precursor proteins before their translocation. The polypeptide is Sec-independent protein translocase protein TatB (Nitrosospira multiformis (strain ATCC 25196 / NCIMB 11849 / C 71)).